We begin with the raw amino-acid sequence, 273 residues long: Shikimate dehydrogenase (NADP(+)) (273 aa).

Shikimate is bound by residues 15–17 (SKS) and Thr-62. Lys-66 serves as the catalytic Proton acceptor. Asp-78 is an NADP(+) binding site. Shikimate is bound by residues Asn-87 and Asp-103. Residues 127–131 (GAGGA), 150–155 (NRTHTR), Ala-218, and Gly-238 each bind NADP(+).

The protein belongs to the shikimate dehydrogenase family. In terms of assembly, homodimer.

The enzyme catalyses shikimate + NADP(+) = 3-dehydroshikimate + NADPH + H(+). Its pathway is metabolic intermediate biosynthesis; chorismate biosynthesis; chorismate from D-erythrose 4-phosphate and phosphoenolpyruvate: step 4/7. Its function is as follows. Involved in the biosynthesis of the chorismate, which leads to the biosynthesis of aromatic amino acids. Catalyzes the reversible NADPH linked reduction of 3-dehydroshikimate (DHSA) to yield shikimate (SA). This Yersinia pseudotuberculosis serotype O:1b (strain IP 31758) protein is Shikimate dehydrogenase (NADP(+)).